A 337-amino-acid chain; its full sequence is Inositol 2-dehydrogenase (337 aa).

It belongs to the Gfo/Idh/MocA family. Homotetramer.

The enzyme catalyses myo-inositol + NAD(+) = scyllo-inosose + NADH + H(+). Involved in the oxidation of myo-inositol (MI) to 2-keto-myo-inositol (2KMI or 2-inosose). In Burkholderia ambifaria (strain MC40-6), this protein is Inositol 2-dehydrogenase.